The chain runs to 1002 residues: Vacuolar protein sorting-associated protein 18 homolog (1002 aa).

Position 344 is a phosphoserine (serine 344). One copy of the CHCR repeat lies at 650–804 (LMAQGSRLEV…DIKGTNDVKK (155 aa)). A coiled-coil region spans residues 827–880 (FEKIDNFKEAICDALRDYNQRIQELQREMAETTEQTDRVTAELQQLRQHSLTVE). The segment at 885–924 (CEICEMMLLVKPFFIFICGHKFHSDCLEKHVVPLLTKEQC) adopts an RING-type; degenerate zinc-finger fold.

It belongs to the VPS18 family. Component of the class C core vacuole/endosome tethering (CORVET) complex composed of at least Vps8, dor/Vps18, car/Vps33A and Vps16A; unlike in other species, Vps11 is not part of the Drosophila complex. Due to the reduced number of components the Drosophila CORVET complex is often referred to as the miniCORVET complex. Interacts with car/Vps33A. Interacts with ema. Component of the homotypic fusion and vacuole protein sorting (HOPS) complex, composed of Vps16A, car/Vps33A, dor/Vps18, Vps39, Vps11 and lt/Vps41. The tethering complex core made up of Vps16A, car/Vps33A and dor/Vps18 and shared by both HOPS and CORVET, preferentially associates with CORVET-specific Vps8 over HOPS-specific lt/Vps41. Interacts with Syx17 (via SNARE domain); the interaction may involve multiple components of the HOPS complex and may promote assembly of the Syx17-Snap29-Vamp7 trans-SNARE complex.

Its subcellular location is the early endosome. It is found in the late endosome membrane. The protein localises to the lysosome membrane. It localises to the cytoplasmic vesicle. The protein resides in the autophagosome. In terms of biological role, core component of the class C core vacuole/endosome tethering (CORVET) and the homotypic fusion and vacuole protein sorting (HOPS) tethering complexes involved in endo-lysosomal vesicle trafficking and lysosome biogenesis. The CORVET complex facilitates docking and fusion of endosomal vesicles during endosome maturation, acts upstream of HOPS, but is not involved in autophagic flux. The CORVET complex may cooperate with the early endosomal tether Rbsn-5 to mediate endosomal fusion. The HOPS complex facilitates docking and fusion of lysosomes with late endosomes and several other types of vesicles. The HOPS complex is also involved in autophagy and crinophagy (the elimination of unused secretory granules through their fusion with lysosomes). The HOPS complex mediates autophagocitic flux, probably by binding autophagosome-associated Syx17/syntaxin 17, promoting assembly of the trans-SNARE complex and instigating autophagosome-lysosome fusion. Independent of Syx17/syntaxin 17, HOPS is involved in biosynthetic transport to lysosomes and lysosome-related organelles such as eye-pigment granules. Required for endocytic degradation of boss/bride of sevenless and N/Notch in developing ommatidia. Required for autophagocytosis-dependent remodeling of myofibrils and transverse-tubules (T-tubules) during metamorphosis. In larval neuromuscular junctions, essential for endosomal sorting that traffics old or dysfunctional synaptic vesicle proteins through a degradative endolysosomal route. Required to maintain normal levels of rush, which functions in endosome formation and trafficking. In Drosophila melanogaster (Fruit fly), this protein is Vacuolar protein sorting-associated protein 18 homolog.